The chain runs to 588 residues: MLAHSTAQDLILQQRSSDDHPQTNPRQTGCGAFIILSSVIAAISGLLVGYELGIISGALLQLQSLLELTCQQQEIVVSALLIGALVASLVGGCLIDLYGRRTTIIFTSILLVFANLLPVVVVSYGSLIAGRIFIGVSISLSAIATCVYIAELSPQDKRGMLVSLNELMIVAGILLAYICNYLFASVNNGWKYMFGLITPLAALQAVAMFFLPRSPRFLIMKGYDDAAGKVLQKLRATTDINEELTAIKSSIKAEYQYKFLDLFCSRDNMRARLLIGLTLSFFVQITGQPNILFYASTVLKSVGFQSTEAASLASTGIGVVKVVSTIPAIFLVDKIGSKTFLCIGSAVMAVSLVSVGLVSLQLDVNYNNICKVHTVQNHSLQDSFVYGPVALAKHNESLFEETGTWLESTKASYHSTSQNGTKLLHVSAPEDSSFGFTVKEPKVKSQSDEIPEYMKWLCLSSLLAFVAAFSIGLGPMAWLVQSEIFPAGIKGRAFAITSSMNWGMNLLISLTFLTLTEMIGLPWMLFGYALMSIASLVFVIMFVPNTKGRPLEEISKELANRSYMCNAVCHRRRSKKKLTPVALIQSPA.

Residues 1–28 are Cytoplasmic-facing; the sequence is MLAHSTAQDLILQQRSSDDHPQTNPRQT. A helical transmembrane segment spans residues 29–49; that stretch reads GCGAFIILSSVIAAISGLLVG. Topologically, residues 50–74 are extracellular; it reads YELGIISGALLQLQSLLELTCQQQE. Residues 75–95 traverse the membrane as a helical segment; it reads IVVSALLIGALVASLVGGCLI. The Cytoplasmic segment spans residues 96–103; sequence DLYGRRTT. A helical membrane pass occupies residues 104-124; that stretch reads IIFTSILLVFANLLPVVVVSY. Over 125–131 the chain is Extracellular; it reads GSLIAGR. Residues 132 to 152 traverse the membrane as a helical segment; sequence IFIGVSISLSAIATCVYIAEL. The Cytoplasmic portion of the chain corresponds to 153 to 158; sequence SPQDKR. Residues 159–179 form a helical membrane-spanning segment; it reads GMLVSLNELMIVAGILLAYIC. Residues 180 to 191 are Extracellular-facing; it reads NYLFASVNNGWK. Residues 192–212 traverse the membrane as a helical segment; that stretch reads YMFGLITPLAALQAVAMFFLP. The Cytoplasmic portion of the chain corresponds to 213–272; sequence RSPRFLIMKGYDDAAGKVLQKLRATTDINEELTAIKSSIKAEYQYKFLDLFCSRDNMRAR. Residues 273–293 traverse the membrane as a helical segment; it reads LLIGLTLSFFVQITGQPNILF. Residues 294–311 are Extracellular-facing; that stretch reads YASTVLKSVGFQSTEAAS. Residues 312–332 traverse the membrane as a helical segment; sequence LASTGIGVVKVVSTIPAIFLV. The Cytoplasmic segment spans residues 333–339; that stretch reads DKIGSKT. A helical membrane pass occupies residues 340-360; that stretch reads FLCIGSAVMAVSLVSVGLVSL. The Extracellular portion of the chain corresponds to 361–459; that stretch reads QLDVNYNNIC…IPEYMKWLCL (99 aa). Residues Asn377, Asn395, and Asn419 are each glycosylated (N-linked (GlcNAc...) asparagine). The chain crosses the membrane as a helical span at residues 460-480; sequence SSLLAFVAAFSIGLGPMAWLV. The Cytoplasmic portion of the chain corresponds to 481-492; it reads QSEIFPAGIKGR. Residues 493–513 traverse the membrane as a helical segment; it reads AFAITSSMNWGMNLLISLTFL. Topologically, residues 514–522 are extracellular; that stretch reads TLTEMIGLP. A helical transmembrane segment spans residues 523 to 543; it reads WMLFGYALMSIASLVFVIMFV. At 544–588 the chain is on the cytoplasmic side; sequence PNTKGRPLEEISKELANRSYMCNAVCHRRRSKKKLTPVALIQSPA.

This sequence belongs to the major facilitator superfamily. Sugar transporter (TC 2.A.1.1) family. Glucose transporter subfamily.

It is found in the cell membrane. The protein localises to the endomembrane system. The protein resides in the cytoplasm. Its subcellular location is the perinuclear region. The enzyme catalyses D-glucose(out) = D-glucose(in). Its function is as follows. Insulin-regulated facilitative glucose transporter. This chain is Solute carrier family 2, facilitated glucose transporter member 12, found in Xenopus laevis (African clawed frog).